The following is an 82-amino-acid chain: Myrmicitoxin(1)-Pm3a (82 aa).

The N-terminal stretch at 1-23 (MEIPKLLYIAVIAIGLSGSLTCA) is a signal peptide. Residues 24 to 59 (TPLANPLADPEAEAEAKATAEATAEAIAEALAEPEP) constitute a propeptide that is removed on maturation. A Leucine amide modification is found at leucine 81.

The protein belongs to the formicidae venom clade 1 family. As to expression, expressed by the venom gland.

It localises to the secreted. Functionally, toxin that causes a slowly developing temporary paralysis when intrathoracically injected into insects (blowflies). Does not cause spontaneous nocifensive behaviors by intraplantar injection in mice. The chain is Myrmicitoxin(1)-Pm3a from Pogonomyrmex maricopa (Maricopa harvester ant).